The following is a 70-amino-acid chain: Dermaseptin-H3 (70 aa).

The N-terminal stretch at 1–22 (MAFLKKSLFLVLFLGMVSLSIC) is a signal peptide. Positions 23 to 43 (EEEKRENEDEELQEDDEQSEM) are excised as a propeptide. Residues 25 to 44 (EKRENEDEELQEDDEQSEMK) are disordered. Residues 30–40 (EDEELQEDDEQ) are compositionally biased toward acidic residues. Residue Leu70 is modified to Leucine amide.

Expressed by the skin glands.

It is found in the secreted. Functionally, has antibacterial activity against the Gram-negative bacteria E.coli and P.aeruginosa, and the Gram-positive bacteria S.aureus and M.luteus. Has antiprotozoal activity against L.amazonensis. No hemolytic activity. This chain is Dermaseptin-H3, found in Pithecopus hypochondrialis (Orange-legged leaf frog).